Consider the following 465-residue polypeptide: Ribulose bisphosphate carboxylase large chain (465 aa).

Position 4 is an N6,N6,N6-trimethyllysine (Lys4). The substrate site is built by Asn113 and Thr163. Catalysis depends on Lys165, which acts as the Proton acceptor. Lys167 is a binding site for substrate. Lys191, Asp193, and Glu194 together coordinate Mg(2+). Position 191 is an N6-carboxylysine (Lys191). His284 (proton acceptor) is an active-site residue. 3 residues coordinate substrate: Arg285, His317, and Ser369.

It belongs to the RuBisCO large chain family. Type I subfamily. As to quaternary structure, heterohexadecamer of 8 large chains and 8 small chains; disulfide-linked. The disulfide link is formed within the large subunit homodimers. Requires Mg(2+) as cofactor. The disulfide bond which can form in the large chain dimeric partners within the hexadecamer appears to be associated with oxidative stress and protein turnover.

It is found in the plastid. The protein localises to the chloroplast. The catalysed reaction is 2 (2R)-3-phosphoglycerate + 2 H(+) = D-ribulose 1,5-bisphosphate + CO2 + H2O. It catalyses the reaction D-ribulose 1,5-bisphosphate + O2 = 2-phosphoglycolate + (2R)-3-phosphoglycerate + 2 H(+). Functionally, ruBisCO catalyzes two reactions: the carboxylation of D-ribulose 1,5-bisphosphate, the primary event in carbon dioxide fixation, as well as the oxidative fragmentation of the pentose substrate in the photorespiration process. Both reactions occur simultaneously and in competition at the same active site. The sequence is that of Ribulose bisphosphate carboxylase large chain from Morella cerifera (Wax myrtle).